A 417-amino-acid chain; its full sequence is Hydroxysqualene dehydroxylase (417 aa).

The protein belongs to the HpnE family.

The catalysed reaction is squalene + FAD + H2O + H(+) = hydroxysqualene + FADH2. The protein operates within secondary metabolite biosynthesis; hopanoid biosynthesis. Functionally, involved in the biosynthesis of the hopanoid precursor squalene (SQ) from farnesyl diphosphate (FPP). Catalyzes the third (last) step, the reduction of hydroxysqualene (HSQ) to SQ. The sequence is that of Hydroxysqualene dehydroxylase from Sinorhizobium fredii (strain NBRC 101917 / NGR234).